The primary structure comprises 215 residues: Octanoyltransferase (215 aa).

A BPL/LPL catalytic domain is found at proline 31–glutamate 206. Substrate-binding positions include arginine 70–histidine 77, serine 137–glycine 139, and glycine 150–alanine 152. The active-site Acyl-thioester intermediate is the cysteine 168.

Belongs to the LipB family.

It is found in the cytoplasm. It carries out the reaction octanoyl-[ACP] + L-lysyl-[protein] = N(6)-octanoyl-L-lysyl-[protein] + holo-[ACP] + H(+). The protein operates within protein modification; protein lipoylation via endogenous pathway; protein N(6)-(lipoyl)lysine from octanoyl-[acyl-carrier-protein]: step 1/2. Its function is as follows. Catalyzes the transfer of endogenously produced octanoic acid from octanoyl-acyl-carrier-protein onto the lipoyl domains of lipoate-dependent enzymes. Lipoyl-ACP can also act as a substrate although octanoyl-ACP is likely to be the physiological substrate. This Pseudomonas entomophila (strain L48) protein is Octanoyltransferase.